Consider the following 97-residue polypeptide: UPF0213 protein YE0453 (97 aa).

Residues 4-79 form the GIY-YIG domain; that stretch reads SLWHLYLLRT…KQLSKQQKEK (76 aa).

This sequence belongs to the UPF0213 family.

This Yersinia enterocolitica serotype O:8 / biotype 1B (strain NCTC 13174 / 8081) protein is UPF0213 protein YE0453.